The primary structure comprises 243 residues: Carboxy-S-adenosyl-L-methionine synthase (243 aa).

S-adenosyl-L-methionine-binding positions include Tyr40, 65–67 (GSS), 90–91 (DN), 118–119 (DI), Asn133, and Arg200.

This sequence belongs to the class I-like SAM-binding methyltransferase superfamily. Cx-SAM synthase family. As to quaternary structure, homodimer.

The catalysed reaction is prephenate + S-adenosyl-L-methionine = carboxy-S-adenosyl-L-methionine + 3-phenylpyruvate + H2O. Functionally, catalyzes the conversion of S-adenosyl-L-methionine (SAM) to carboxy-S-adenosyl-L-methionine (Cx-SAM). The chain is Carboxy-S-adenosyl-L-methionine synthase from Shewanella denitrificans (strain OS217 / ATCC BAA-1090 / DSM 15013).